Reading from the N-terminus, the 190-residue chain is Imidazoleglycerol-phosphate dehydratase (190 aa).

The protein belongs to the imidazoleglycerol-phosphate dehydratase family.

It is found in the cytoplasm. The enzyme catalyses D-erythro-1-(imidazol-4-yl)glycerol 3-phosphate = 3-(imidazol-4-yl)-2-oxopropyl phosphate + H2O. It participates in amino-acid biosynthesis; L-histidine biosynthesis; L-histidine from 5-phospho-alpha-D-ribose 1-diphosphate: step 6/9. This Sulfurovum sp. (strain NBC37-1) protein is Imidazoleglycerol-phosphate dehydratase.